The chain runs to 631 residues: Chaperone protein HtpG (631 aa).

Residues 1 to 342 (MSEQTANKET…SNDLPLNVSR (342 aa)) are a; substrate-binding. Positions 343–559 (EILQDNKVTQ…DFEMGTQMAK (217 aa)) are b. Positions 560–631 (LLEAAGQAAP…LSAMNQLLAK (72 aa)) are c.

Belongs to the heat shock protein 90 family. In terms of assembly, homodimer.

Its subcellular location is the cytoplasm. Molecular chaperone. Has ATPase activity. The chain is Chaperone protein HtpG from Aliivibrio fischeri (strain ATCC 700601 / ES114) (Vibrio fischeri).